A 599-amino-acid chain; its full sequence is Kinesin light chain 2 (599 aa).

Residues 78-143 (ILALSSHLGA…KQHLLFMSQI (66 aa)) adopt a coiled-coil conformation. Residues 154 to 163 (EKGDVPKDSL) show a composition bias toward basic and acidic residues. The segment at 154 to 188 (EKGDVPKDSLDDLFPNEDEQSPAPSPGGGDVAAQH) is disordered. 2 positions are modified to phosphoserine: Ser-174 and Ser-178. 5 TPR repeats span residues 197–230 (LRTL…LEKT), 239–272 (ATML…REKT), 281–314 (AATL…REKV), 323–356 (AKQL…YATR), and 365–398 (AKTK…AHEK). Phosphoserine is present on Ser-443. Residues 447–480 (NTTLRTLGALYRPEGKLEAAHTLEDCASRSRKQG) form a TPR 6 repeat. A disordered region spans residues 492-541 (LLKDGSGRGHRRGSRDVAGPQSESDLEESGPAAEWSGDGSGSLRRSGSFG). Ser-505 and Ser-515 each carry phosphoserine. Positions 532–541 (GSLRRSGSFG) are enriched in low complexity. Phosphoserine is present on residues Ser-574, Ser-575, and Ser-582.

Belongs to the kinesin light chain family. As to quaternary structure, oligomeric complex composed of two heavy chains and two light chains. Interacts (via TPR repeats) with PLEKHM2.

Its subcellular location is the cytoplasm. The protein resides in the cytoskeleton. It is found in the lysosome membrane. Its function is as follows. Kinesin is a microtubule-associated force-producing protein that plays a role in organelle transport. The light chain functions in coupling of cargo to the heavy chain or in the modulation of its ATPase activity. Through binding with PLEKHM2 and ARL8B, recruits kinesin-1 to lysosomes and hence direct lysosomes movement toward microtubule plus ends. This Mus musculus (Mouse) protein is Kinesin light chain 2.